We begin with the raw amino-acid sequence, 349 residues long: S-adenosylmethionine:tRNA ribosyltransferase-isomerase (349 aa).

It belongs to the QueA family. In terms of assembly, monomer.

The protein resides in the cytoplasm. The enzyme catalyses 7-aminomethyl-7-carbaguanosine(34) in tRNA + S-adenosyl-L-methionine = epoxyqueuosine(34) in tRNA + adenine + L-methionine + 2 H(+). It participates in tRNA modification; tRNA-queuosine biosynthesis. Functionally, transfers and isomerizes the ribose moiety from AdoMet to the 7-aminomethyl group of 7-deazaguanine (preQ1-tRNA) to give epoxyqueuosine (oQ-tRNA). The sequence is that of S-adenosylmethionine:tRNA ribosyltransferase-isomerase from Ruegeria pomeroyi (strain ATCC 700808 / DSM 15171 / DSS-3) (Silicibacter pomeroyi).